A 675-amino-acid chain; its full sequence is Sodium/myo-inositol cotransporter 2 (675 aa).

The Extracellular segment spans residues 1 to 27; sequence MESGTSSPQPPQLDPLDAFPQKGLEPG. A helical membrane pass occupies residues 28–48; it reads DIAVLVLYFLFVLAVGLWSTV. At 49-65 the chain is on the cytoplasmic side; that stretch reads KTKRDTVKGYFLAGGDM. Residues 66-88 form a helical membrane-spanning segment; that stretch reads VWWPVGASLFASNVGSGHFIGLA. Topologically, residues 89-102 are extracellular; the sequence is GSGAATGISVSAYE. The helical transmembrane segment at 103 to 123 threads the bilayer; it reads LNGLFSVLMLAWIFLPIYIAG. At 124-135 the chain is on the cytoplasmic side; sequence QVTTMPEYLRKR. A helical membrane pass occupies residues 136-156; that stretch reads FGGIRIPIILAVLYLFIYIFT. Residues 157–180 are Extracellular-facing; the sequence is KISVDMYAGAIFIQQSLHLDLYLA. Residues 181-201 traverse the membrane as a helical segment; it reads IVGLLAITAVYTVAGGLAAVI. Residues 202 to 208 are Cytoplasmic-facing; that stretch reads YTDALQT. A helical membrane pass occupies residues 209 to 229; the sequence is LIMLIGALTLMGYSFAAVGGM. Residues 230-272 are Extracellular-facing; sequence EGLKEKYFLALASNRSENSSCGLPREDAFHIFRDPLTSDLPWP. A helical transmembrane segment spans residues 273–293; sequence GVLFGMSIPSLWYWCTDQVIV. Residues 294–308 are Cytoplasmic-facing; the sequence is QRTLAAKNLSHAKGG. The chain crosses the membrane as a helical span at residues 309 to 329; sequence ALMAAYLKVLPLFIMVFPGMV. Topologically, residues 330 to 375 are extracellular; it reads SRILFPDQVACADPEICQKICSNPSGCSDIAYPKLVLELLPTGLRG. A helical membrane pass occupies residues 376–396; it reads LMMAVMVAALMSSLTSIFNSA. Residues 397 to 418 lie on the Cytoplasmic side of the membrane; it reads STIFTMDLWNHLRPRASEKELM. A helical transmembrane segment spans residues 419-439; sequence IVGRVFVLLLVLVSILWIPVV. The Extracellular segment spans residues 440 to 446; sequence QASQGGQ. The helical transmembrane segment at 447-467 threads the bilayer; it reads LFIYIQSISSYLQPPVAVVFI. Over 468–479 the chain is Cytoplasmic; it reads MGCFWKRTNEKG. Residues 480-500 traverse the membrane as a helical segment; that stretch reads AFWGLISGLLLGLVRLVLDFI. The Extracellular portion of the chain corresponds to 501–521; it reads YVQPRCDQPDERPVLVKSIHY. The helical transmembrane segment at 522–542 threads the bilayer; the sequence is LYFSMILSTVTLITVSTVSWF. Residues 543–654 lie on the Cytoplasmic side of the membrane; sequence TEPPSKEMVS…SLEENPLVKT (112 aa). A helical membrane pass occupies residues 655-675; sequence LLDVNLIFCVSCAIFIWGYFA.

It belongs to the sodium:solute symporter (SSF) (TC 2.A.21) family. As to expression, highest expression in heart, skeletal muscle, kidney, liver and placenta. Weaker expression in brain, colon, spleen, lung and peripheral blood leukocytes.

The protein localises to the membrane. It is found in the apical cell membrane. The enzyme catalyses myo-inositol(out) + 2 Na(+)(out) = myo-inositol(in) + 2 Na(+)(in). It carries out the reaction 1D-chiro-inositol(out) + 2 Na(+)(out) = 1D-chiro-inositol(in) + 2 Na(+)(in). The catalysed reaction is D-glucose(out) + 2 Na(+)(out) = D-glucose(in) + 2 Na(+)(in). It catalyses the reaction D-xylose(out) + 2 Na(+)(out) = D-xylose(in) + 2 Na(+)(in). Its activity is regulated as follows. MI transport activity inhibited by D-chiro-inositol (DCI), phlorizin (Pz) and sodium (Na(+)). Insulin increases D-chiro-inositol uptake. Involved in the sodium-dependent cotransport of myo-inositol (MI) with a Na(+):MI stoichiometry of 2:1. Exclusively responsible for apical MI transport and absorption in intestine. Can also transport D-chiro-inositol (DCI) but not L-fucose. Exhibits stereospecific cotransport of both D-glucose and D-xylose. May induce apoptosis through the TNF-alpha, PDCD1 pathway. May play a role in the regulation of MI concentration in serum, involving reabsorption in at least the proximal tubule of the kidney. In Homo sapiens (Human), this protein is Sodium/myo-inositol cotransporter 2.